Consider the following 161-residue polypeptide: Protein-export protein SecB (161 aa).

This sequence belongs to the SecB family. As to quaternary structure, homotetramer, a dimer of dimers. One homotetramer interacts with 1 SecA dimer.

The protein resides in the cytoplasm. One of the proteins required for the normal export of preproteins out of the cell cytoplasm. It is a molecular chaperone that binds to a subset of precursor proteins, maintaining them in a translocation-competent state. It also specifically binds to its receptor SecA. This chain is Protein-export protein SecB, found in Shewanella pealeana (strain ATCC 700345 / ANG-SQ1).